Reading from the N-terminus, the 977-residue chain is Aspartate, glycine, lysine and serine-rich protein (977 aa).

Residues 23–116 (GVLPDVDSGF…PITNLGSSTS (94 aa)) form a disordered region. Residues 37 to 50 (EETKSEPKQPDTKP) are compositionally biased toward basic and acidic residues. Over residues 51-63 (EQPSVSKPDSSVN) the composition is skewed to polar residues. Residue Asn136 is glycosylated (N-linked (GlcNAc...) asparagine). 2 disordered regions span residues 246–767 (AGGG…TSRG) and 780–922 (GGGK…GSGL). Residues 251–278 (YYSDSSDSSDSDSSGSDSSESGSSESGS) are compositionally biased toward low complexity. Residues 309–325 (NGSPDNGTPGSGSSRYT) show a composition bias toward polar residues. Residues 410–427 (LEDELLGSDSSDEDDIDD) show a composition bias toward acidic residues. Over residues 428-443 (GLGGLGLGAGPGGPGG) the composition is skewed to gly residues. Basic residues-rich tracts occupy residues 447–457 (TPKHKPRTDKK) and 465–540 (KRKP…VQRK). A compositionally biased stretch (basic and acidic residues) spans 541–557 (QPREYKQESPEVEREHS). Residues 572-583 (KILITSLTSSRG) are compositionally biased toward low complexity. The segment covering 591-643 (DGSGSGNGGGDDGNGGGAGNGGGAGNGGGAGNGGGAGNGGGNGGGGNGGGGND) has biased composition (gly residues). Positions 660–675 (EHRNRCEDDDDYREKC) are enriched in basic and acidic residues. Positions 700 to 724 (SGSSSSSSATESESSSTSTTPSTSS) are enriched in low complexity. Composition is skewed to polar residues over residues 730–744 (ILST…TRSG), 758–767 (SRPSVATSRG), and 785–801 (STGT…TSSA). 3 stretches are compositionally biased toward low complexity: residues 803 to 814 (GLDLSGLLGQLG), 822 to 857 (GPKP…GLLG), and 870 to 907 (KKPT…KLSP).

Component of the acid-insoluble and acid-soluble organic matrix of calcified layers of the shell (at protein level).

The protein resides in the secreted. The chain is Aspartate, glycine, lysine and serine-rich protein from Lottia gigantea (Giant owl limpet).